An 889-amino-acid polypeptide reads, in one-letter code: Coatomer subunit gamma-2 (889 aa).

5 HEAT repeats span residues 67–102 (VEAT…SPSA), 103–140 (DEVI…STLL), 289–326 (RELT…THPL), 328–360 (VTNC…TGNE), and 361–398 (SSVD…KFPL). Residues 596–617 (PLAEKKTTGKKPTGPASALSGP) are disordered.

This sequence belongs to the COPG family. In terms of assembly, oligomeric complex that consists of at least the alpha, beta, beta', gamma, delta, epsilon and zeta subunits.

It is found in the cytoplasm. The protein localises to the golgi apparatus membrane. It localises to the cytoplasmic vesicle. Its subcellular location is the COPI-coated vesicle membrane. Functionally, the coatomer is a cytosolic protein complex that binds to dilysine motifs and reversibly associates with Golgi non-clathrin-coated vesicles, which further mediate biosynthetic protein transport from the ER, via the Golgi up to the trans Golgi network. Coatomer complex is required for budding from Golgi membranes, and is essential for the retrograde Golgi-to-ER transport of dilysine-tagged proteins. This Oryza sativa subsp. japonica (Rice) protein is Coatomer subunit gamma-2.